A 217-amino-acid polypeptide reads, in one-letter code: IMPACT family member YvyE (217 aa).

This sequence belongs to the IMPACT family.

The sequence is that of IMPACT family member YvyE (yvyE) from Bacillus subtilis (strain 168).